The sequence spans 217 residues: Ribonuclease T (217 aa).

Positions 20–194 (VVIDIETAGF…YDTQQTANLF (175 aa)) constitute an Exonuclease domain. D23, E25, H181, and D186 together coordinate Mg(2+). H181 serves as the catalytic Proton donor/acceptor.

This sequence belongs to the RNase T family. As to quaternary structure, homodimer. It depends on Mg(2+) as a cofactor.

In terms of biological role, trims short 3' overhangs of a variety of RNA species, leaving a one or two nucleotide 3' overhang. Responsible for the end-turnover of tRNA: specifically removes the terminal AMP residue from uncharged tRNA (tRNA-C-C-A). Also appears to be involved in tRNA biosynthesis. The sequence is that of Ribonuclease T from Buchnera aphidicola subsp. Baizongia pistaciae (strain Bp).